Consider the following 37-residue polypeptide: Large ribosomal subunit protein bL36c (37 aa).

The protein belongs to the bacterial ribosomal protein bL36 family.

It is found in the plastid. The protein resides in the chloroplast. This Coffea arabica (Arabian coffee) protein is Large ribosomal subunit protein bL36c.